A 177-amino-acid polypeptide reads, in one-letter code: Protein BROTHER of FT and TFL 1 (177 aa).

This sequence belongs to the phosphatidylethanolamine-binding protein family.

The protein resides in the cytoplasm. In terms of biological role, may form complexes with phosphorylated ligands by interfering with kinases and their effectors. The polypeptide is Protein BROTHER of FT and TFL 1 (BFT) (Arabidopsis thaliana (Mouse-ear cress)).